The sequence spans 374 residues: DNA replication and repair protein RecF (374 aa).

An ATP-binding site is contributed by 30–37 (GPNAQGKT).

Belongs to the RecF family.

The protein resides in the cytoplasm. Its function is as follows. The RecF protein is involved in DNA metabolism; it is required for DNA replication and normal SOS inducibility. RecF binds preferentially to single-stranded, linear DNA. It also seems to bind ATP. This chain is DNA replication and repair protein RecF, found in Lactobacillus johnsonii (strain CNCM I-12250 / La1 / NCC 533).